A 325-amino-acid polypeptide reads, in one-letter code: Ribonucleoside-diphosphate reductase small chain (325 aa).

Positions 74, 105, and 108 each coordinate Fe cation. Tyrosine 112 is a catalytic residue. Fe cation is bound by residues glutamate 168, glutamate 202, and histidine 205.

Belongs to the ribonucleoside diphosphate reductase small chain family. In terms of assembly, heterodimer of a large and a small chain. Fe cation is required as a cofactor.

The enzyme catalyses a 2'-deoxyribonucleoside 5'-diphosphate + [thioredoxin]-disulfide + H2O = a ribonucleoside 5'-diphosphate + [thioredoxin]-dithiol. In terms of biological role, ribonucleoside-diphosphate reductase holoenzyme provides the precursors necessary for viral DNA synthesis. Allows virus growth in non-dividing cells. Catalyzes the biosynthesis of deoxyribonucleotides from the corresponding ribonucleotides. The protein is Ribonucleoside-diphosphate reductase small chain of Yaba-like disease virus (YLDV).